Here is a 665-residue protein sequence, read N- to C-terminus: MNRATITSNKSNAPSFLSIPLLAHNNNINNNNNNINNNNNNNNINSNNNGTTTTTTTTTITTISYKNNISELITIIDKIIKDLNNFKSKTVLNDQEFSELNNTIQFTKTSLVNYIHYENENKINFNLSDSKIICSEIKIIEYGIESFIFSICKLYQDLIQFQQLLLKLSSPPTTITFNTTINSTNSFTSNLIINNLLKVDSILKQSIDQLLALFPPSSSSLNNENNNNNNNNYNPYELLSNEAKVLWNQFGGNKITFVPWSIFFKGFQKFFNKEILAYESSLRYTLDFTRDGYVTPFKLSVFIKWFGALPVSLGIFQDVINSKIFSGFISGIEATQLLSRQQVGYYLLRCSKTIVGAFAITFVDSTNHIRHCLLYPVTSSINGGLTLQKPPDIFKSILSFILSFSSKLKYPIGPLDNDLLPPLSIINNNPILILPDENNNNQNNNQNNNNNNINTFSTSPSSFFTIDSSNSSDTNKSPTKSRKSSFKNDKDKKEKEKEKGKDKEKEKERVSDENFDNLPTFLNSEDENDNNNNNNNNNNNNNNNNNNNNNNNNNNSSNNNNCNIKETHQTTSNGSSGNNNNNNNNNNNNNNNNNNNNSSSTTKRNNNNNGSDESKDLCTVCMDNEINTVFLECGHLSCCSLCSVKLKKCPICRSRITRVINIFKS.

The tract at residues 30–50 (NNNNNINNNNNNNNINSNNNG) is disordered. Positions 109-231 (TSLVNYIHYE…NNENNNNNNN (123 aa)) are 4H. The Cbl-PTB domain maps to 109-400 (TSLVNYIHYE…PDIFKSILSF (292 aa)). An EF-hand-like region spans residues 232–306 (NYNPYELLSN…FKLSVFIKWF (75 aa)). Ca(2+) is bound by residues D287, T289, D291, and Y293. The interval 307–400 (GALPVSLGIF…PDIFKSILSF (94 aa)) is SH2-like. Disordered regions lie at residues 437 to 456 (ENNN…INTF) and 467 to 609 (DSSN…NNNN). The span at 467 to 478 (DSSNSSDTNKSP) shows a compositional bias: low complexity. Positions 479–544 (TKSRKSSFKN…NNNNNNNNNN (66 aa)) form a coiled coil. Residues 486-512 (FKNDKDKKEKEKEKGKDKEKEKERVSD) show a composition bias toward basic and acidic residues. Low complexity-rich tracts occupy residues 530 to 561 (NNNN…NNNN) and 571 to 609 (TSNG…NNNN). The RING-type zinc finger occupies 618–653 (CTVCMDNEINTVFLECGHLSCCSLCSVKLKKCPICR).

Ubiquitinated.

It localises to the cytoplasm. The protein localises to the nucleus. The catalysed reaction is S-ubiquitinyl-[E2 ubiquitin-conjugating enzyme]-L-cysteine + [acceptor protein]-L-lysine = [E2 ubiquitin-conjugating enzyme]-L-cysteine + N(6)-ubiquitinyl-[acceptor protein]-L-lysine.. It participates in protein modification; protein ubiquitination. Acts as an E3 ubiquitin-protein ligase, which accepts ubiquitin from specific E2 ubiquitin-conjugating enzymes, and then transfers it to substrates promoting their degradation by the proteasome. Up-regulates STATc tyrosine phosphorylation via an inhibitory effect on ptpC accumulation. Recognizes activated receptor tyrosine kinases, RTKs and terminates signaling. In Dictyostelium discoideum (Social amoeba), this protein is E3 ubiquitin-protein ligase cblA (cblA-1).